Consider the following 135-residue polypeptide: D-ribose pyranase (135 aa).

Catalysis depends on H20, which acts as the Proton donor. Substrate contacts are provided by residues D28, H102, and 124–126 (YAN).

It belongs to the RbsD / FucU family. RbsD subfamily. As to quaternary structure, homodecamer.

Its subcellular location is the cytoplasm. The catalysed reaction is beta-D-ribopyranose = beta-D-ribofuranose. It participates in carbohydrate metabolism; D-ribose degradation; D-ribose 5-phosphate from beta-D-ribopyranose: step 1/2. Catalyzes the interconversion of beta-pyran and beta-furan forms of D-ribose. The sequence is that of D-ribose pyranase from Rhodopirellula baltica (strain DSM 10527 / NCIMB 13988 / SH1).